The sequence spans 248 residues: Triosephosphate isomerase (248 aa).

Residue 9–11 (NWK) coordinates substrate. His-94 serves as the catalytic Electrophile. The Proton acceptor role is filled by Glu-166. Substrate is bound by residues Gly-172, Ser-211, and 232 to 233 (GG).

The protein belongs to the triosephosphate isomerase family. Homodimer.

The protein localises to the cytoplasm. It carries out the reaction D-glyceraldehyde 3-phosphate = dihydroxyacetone phosphate. It participates in carbohydrate biosynthesis; gluconeogenesis. The protein operates within carbohydrate degradation; glycolysis; D-glyceraldehyde 3-phosphate from glycerone phosphate: step 1/1. In terms of biological role, involved in the gluconeogenesis. Catalyzes stereospecifically the conversion of dihydroxyacetone phosphate (DHAP) to D-glyceraldehyde-3-phosphate (G3P). The protein is Triosephosphate isomerase of Vesicomyosocius okutanii subsp. Calyptogena okutanii (strain HA).